Reading from the N-terminus, the 483-residue chain is MELKNKKWTDEEFHKQREEVLQQWPTGKEVDLQEAVDYLKKIPAEKNFAEKLVLAKKKGITMAQPRAGVALLDEHIELLRYLQDEGGADFLPSTIDAYTRQNRYDECENGIKESEKAGRSLLNGFPGVNYGVKGCRKVLEAVNLPLQARHGTPDSRLLAEIIHAGGWTSNEGGGISYNVPYAKNVTIEKSLLDWQYCDRLVGFYEEQGVHINREPFGPLTGTLVPPSMSNAVGITEALLAAEQGVKNITVGYGECGNMIQDIAALRCLEEQTNEYLKAYGYNDVFVTTVFHQWMGGFPQDESKAFGVIVTATTIAALAGATKVIVKTPHEAIGIPTKEANAAGIKATKMALNMLEGQRMPMSKELETEMAVIKAETKCILDKMFELGKGDLAIGTVKAFETGVMDIPFGPSKYNAGKMMPVRDNLGCVRYLEFGNVPFTEEIKNYNRERLQERAKFEGRDVSFQMVIDDIFAVGKGRLIGRPE.

Residue R66 coordinates L-glutamate. Residue G68 participates in adenosylcob(III)alamin binding. R100 lines the L-glutamate pocket. N123 contacts adenosylcob(III)alamin. L-glutamate is bound by residues 149 to 150, E171, and Y177; that span reads RH. P180 is a binding site for adenosylcob(III)alamin. Residue Y181 participates in L-glutamate binding. Positions 297, 326, 330, and 334 each coordinate adenosylcob(III)alamin.

It belongs to the methylaspartate mutase GlmE subunit family. In terms of assembly, heterotetramer composed of 2 epsilon subunits (GlmE) and 2 sigma subunits (GlmS). GlmE exists as a homodimer and GlmS as a monomer. It depends on adenosylcob(III)alamin as a cofactor.

The enzyme catalyses (2S,3S)-3-methyl-L-aspartate = L-glutamate. The protein operates within amino-acid degradation; L-glutamate degradation via mesaconate pathway; acetate and pyruvate from L-glutamate: step 1/4. Competitively inhibited by (2S,4S)-4-fluoroglutamate, 2-methyleneglutarate, (2R,3RS)-3-fluoroglutamate and (S)-3-methylitaconate. Catalyzes the carbon skeleton rearrangement of L-glutamate to L-threo-3-methylaspartate ((2S,3S)-3-methylaspartate). The protein is Glutamate mutase epsilon subunit of Clostridium cochlearium.